Consider the following 389-residue polypeptide: MTTISRNTGTEISIMIKEKRLRLNMTQKELADAVGMSKNGDRTIRRWENGETCPSQLEISAILRFPEIAPFENRKTAKYKMIDLFAGIGGTRLGFHQTEKVKSVFSSEIDKFAIKTYKANFGDEPHGDITKIDEKDIPDHDILVGGFPCQAFSQAGKKLGFDDTRGTLFFEIARIIKEKRPKAFLLENVKNLKTHDKGRTFKTILNTLEELDYEVHTALFKARDFGLPQNRERIYIVGFDRKSISNYSDFQMPTPLQEKTRVGNILESVVDDKYTISDKLWDGHQRRKTENKKNGKGFGYTLFNQDSEYTNTLSARYYKDGSEILIEQKNKNPRKITPREAARLQGFPENFIIPVSDTQAYKEFGNSVAVPTIHAIAEKMLEVLEKSKK.

One can recognise an HTH cro/C1-type domain in the interval 16–71 (IKEKRLRLNMTQKELADAVGMSKNGDRTIRRWENGETCPSQLEISAILRFPEIAPF). The 309-residue stretch at 79 to 387 (YKMIDLFAGI…EKMLEVLEKS (309 aa)) folds into the SAM-dependent MTase C5-type domain. The active site involves Cys-149.

Belongs to the class I-like SAM-binding methyltransferase superfamily. C5-methyltransferase family.

It catalyses the reaction a 2'-deoxycytidine in DNA + S-adenosyl-L-methionine = a 5-methyl-2'-deoxycytidine in DNA + S-adenosyl-L-homocysteine + H(+). In terms of biological role, a methylase, recognizes the double-stranded sequence 5'-CCNGG-3', methylates C-2 on both strands, and protects the DNA from cleavage by the ScrFI endonuclease. This Lactococcus lactis subsp. cremoris (Streptococcus cremoris) protein is Type II methyltransferase M1.ScrFI (scrFIAM).